The chain runs to 424 residues: MTWKPIICLAALVLSASAIPVDNNVEGEPEVECGPNSITVNFNTRNPFEGHVYVKGLYDQAGCRSDEGGRQVAGIELPFDSCNTARTRSLNPKGVFVSTTVVISFHPQFVTKVDRAYRIQCFYMESDKTVSTQIEVSDLTTAFQTQVVPMPVCKYEILDGGPSGQPIQFATIGQQVYHKWTCDSETTDTFCAVVHSCTVDDGNGDTVQILNEEGCALDKFLLNNLEYPTDLMAGQEAHVYKYADRSQLFYQCQISITIKDPGSECARPTCSEPQGFGAVKQAGAGGAHAAAAPQAGVEEVQAAPVAAAAPVAAPVAAAAAAPAVPRATLAQLRLLRKKRSFGENEGILDVRVEINTLDIMEGASPSAPEAAALVSEESVRRRATSTGICLTPIGFASFLGIGTIVATALSATIFYVARPTSHKH.

Residues 1-18 form the signal peptide; the sequence is MTWKPIICLAALVLSASA. At 19–392 the chain is on the extracellular side; the sequence is IPVDNNVEGE…ATSTGICLTP (374 aa). In terms of domain architecture, ZP spans 32–277; the sequence is ECGPNSITVN…PTCSEPQGFG (246 aa). A disulfide bridge connects residues Cys-197 and Cys-252. Tandem repeats lie at residues 302-305, 307-311, 312-315, and 320-323. The interval 302 to 323 is 4 X 4 AA repeats of A-A-P-[AVI]; the sequence is AAPVAAAAPVAAPVAAAAAAPA. The chain crosses the membrane as a helical span at residues 393-413; that stretch reads IGFASFLGIGTIVATALSATI. Residues 414 to 424 lie on the Cytoplasmic side of the membrane; sequence FYVARPTSHKH.

The protein resides in the cell membrane. Its subcellular location is the secreted. In terms of biological role, component of the cuticles, which contributes to the formation of extracellular envelopes protecting the organism from the environment. Plays a role in alae formation in dauer larvae. The chain is Cuticlin-1 from Caenorhabditis elegans.